The following is a 44-amino-acid chain: Thymosin beta-10 (44 aa).

Composition is skewed to basic and acidic residues over residues 1–25 (MADKPDMGEIASFDKAKLKKTETQE) and 33–44 (ETIEQEKRSEIS). Positions 1–44 (MADKPDMGEIASFDKAKLKKTETQEKNTLPTKETIEQEKRSEIS) are disordered. N-acetylalanine is present on Ala2. At Lys4 the chain carries N6-acetyllysine. At Ser12 the chain carries Phosphoserine. N6-acetyllysine is present on Lys15. Phosphothreonine is present on residues Thr21, Thr23, and Thr34. Lys39 is subject to N6-acetyllysine. At Ser41 the chain carries Phosphoserine.

This sequence belongs to the thymosin beta family.

It localises to the cytoplasm. It is found in the cytoskeleton. In terms of biological role, plays an important role in the organization of the cytoskeleton. Binds to and sequesters actin monomers (G actin) and therefore inhibits actin polymerization. In Rattus norvegicus (Rat), this protein is Thymosin beta-10 (Tmsb10).